Consider the following 296-residue polypeptide: 4-hydroxy-tetrahydrodipicolinate synthase (296 aa).

Threonine 45 contacts pyruvate. Tyrosine 133 acts as the Proton donor/acceptor in catalysis. Lysine 161 functions as the Schiff-base intermediate with substrate in the catalytic mechanism. Isoleucine 203 serves as a coordination point for pyruvate.

Belongs to the DapA family. In terms of assembly, homotetramer; dimer of dimers.

It localises to the cytoplasm. It catalyses the reaction L-aspartate 4-semialdehyde + pyruvate = (2S,4S)-4-hydroxy-2,3,4,5-tetrahydrodipicolinate + H2O + H(+). The protein operates within amino-acid biosynthesis; L-lysine biosynthesis via DAP pathway; (S)-tetrahydrodipicolinate from L-aspartate: step 3/4. Functionally, catalyzes the condensation of (S)-aspartate-beta-semialdehyde [(S)-ASA] and pyruvate to 4-hydroxy-tetrahydrodipicolinate (HTPA). The polypeptide is 4-hydroxy-tetrahydrodipicolinate synthase (Idiomarina loihiensis (strain ATCC BAA-735 / DSM 15497 / L2-TR)).